Reading from the N-terminus, the 236-residue chain is Small ribosomal subunit protein uS2c (236 aa).

The protein belongs to the universal ribosomal protein uS2 family.

It localises to the plastid. This chain is Small ribosomal subunit protein uS2c (rps2), found in Cuscuta obtusiflora (Peruvian dodder).